The chain runs to 145 residues: MAPKAEKKPAEKKPVEEKSKAEKAPAEKKPKAGKKLPKEAGAGGDKKKKMKKKSVETYKIYIFKVLKQVHPDIGISSKAMGIMNSFINDIFEKLASESSKLARYNKKPTITSREIQTAVRLVLPGELAKHAVSEGTKAVTKFTSS.

The segment covering 1-30 has biased composition (basic and acidic residues); the sequence is MAPKAEKKPAEKKPVEEKSKAEKAPAEKKP. The interval 1 to 53 is disordered; sequence MAPKAEKKPAEKKPVEEKSKAEKAPAEKKPKAGKKLPKEAGAGGDKKKKMKKK. N,N,N-trimethylalanine; alternate is present on alanine 2. Alanine 2 is subject to N,N-dimethylalanine; alternate. Position 2 is an N-methylalanine; alternate (alanine 2). Lysine 4 bears the N6-methyllysine; partial mark. An N6-acetyllysine mark is found at lysine 7 and lysine 12. The residue at position 13 (lysine 13) is an N6,N6-dimethyllysine. 3 positions are modified to N6-acetyllysine: lysine 23, lysine 28, and lysine 34. Lysine 35 is modified (N6-acetyllysine; partial). A Glycyl lysine isopeptide (Lys-Gly) (interchain with G-Cter in ubiquitin) cross-link involves residue lysine 141.

Belongs to the histone H2B family. In terms of assembly, the nucleosome is a histone octamer containing two molecules each of H2A, H2B, H3 and H4 assembled in one H3-H4 heterotetramer and two H2A-H2B heterodimers. The octamer wraps approximately 147 bp of DNA. Post-translationally, can be acetylated to form H2BK6ac, H2BK11ac, H2BK22ac, H2BK27ac H2BK33ac and H2BK34ac. Mono-, di- or trimethylated at the N-terminus to form H2BA1me1/2/3. H2BA1me2 and H2BA1me3 may be methylated and/or acetylated to form H2BA1me2K3me1, H2BA1me2K3me1K6ac, H2BA1me2K6ac H2BA1me3K6ac, H2BA1me3K6acK11ac and H2BA1me2K3me1K6acK11ac. In terms of processing, monoubiquitinated by BRE1 to form H2BK143ub1 and deubiquitinated by UBP26. Required for heterochromatic histone H3 di- and trimethylation at H3K4me. May give a specific tag for epigenetic transcriptional activation.

It localises to the nucleus. The protein localises to the chromosome. Its function is as follows. Core component of nucleosome. Nucleosomes wrap and compact DNA into chromatin, limiting DNA accessibility to the cellular machineries which require DNA as a template. Histones thereby play a central role in transcription regulation, DNA repair, DNA replication and chromosomal stability. DNA accessibility is regulated via a complex set of post-translational modifications of histones, also called histone code, and nucleosome remodeling. This chain is Histone H2B.7, found in Arabidopsis thaliana (Mouse-ear cress).